Here is a 328-residue protein sequence, read N- to C-terminus: 2-oxoglutarate-dependent dioxygenase gloE (328 aa).

The region spanning T170–P271 is the Fe2OG dioxygenase domain. Fe cation contacts are provided by H194, D196, and H249. R262 is a 2-oxoglutarate binding site.

This sequence belongs to the iron/ascorbate-dependent oxidoreductase family. Fe(2+) serves as cofactor.

Its pathway is mycotoxin biosynthesis. Its function is as follows. 2-oxoglutarate-dependent dioxygenase; part of the gene cluster that mediates the biosynthesis of pneumocandins, lipohexapeptides of the echinocandin family that prevent fungal cell wall formation by non-competitive inhibition of beta-1,3-glucan synthase. The 10,12-dimethylmyristoyl side chain is synthesized by the reducing polyketide synthase gloL/GLPKS4. The thioesterase gloN/GLHYD exclusively interacts with gloL/GLPKS4 to maintain turnover of the polyketide side chain. The 10R,12S-dimethylmyristic acid is then transferred to the first thiolation domain of the nonribosomal peptide synthetase gloA/GLNRPS4 by the acyl-AMP ligase gloD/GLligase, followed by its acylation to L-ornithine to trigger elongation of the cyclic hexapeptide. L-ornithine, 4R-hydroxyl-L-proline (generated from L-proline by the dioxygenase gloF/GLOXY2), 3S-hydroxyl-L-homotyrosine (generated by gloG/GLHtyB, gloH/GLHtyA, gloI/GLHtyC, gloJ/GLHtyD and hydroxylated at C-3 by the dioxygenase gloM/GLOXY1), 3R-hydroxyl-L-glutamine (generated from L-glutamine probably by the dioxygenase gloE/GLOXY3) and 3S-hydroxyl-L-proline (generated from L-proline by the dioxygenase gloF/GLOXY2 to yield pneumocandin B0), or 3S-hydroxyl-4S-methyl-L-proline (generated from L-leucine by the dioxygenase gloC/GLOXY4 to yield pneumocandin A0) are sequentially added to the growing chain. The last C domain of gloA/GLNRPS4 is proposed to be responsible for cyclization by condensation to form the peptide bond between L-ornithine and 3S-hydroxyl-4S-methyl-L-proline (for pneumocandin A0) or 3S-hydroxyl-L-proline (for pneumocandin B0). Finally, the subsequent C-4 hydroxylation of 3S-hydroxyl-L-homotyrosine and L-ornithine dihydroxylation at C-4 and C-5 are performed by the cytochrome P450 monooxygenases gloP/GLP450-1 and gloO/GLP450-2, respectively. In Glarea lozoyensis (strain ATCC 20868 / MF5171), this protein is 2-oxoglutarate-dependent dioxygenase gloE.